A 537-amino-acid polypeptide reads, in one-letter code: Eukaryotic translation initiation factor 3 subunit L (537 aa).

Over residues 1–19 (MSRRVEFDMSHEDHTDRRR) the composition is skewed to basic and acidic residues. The interval 1 to 28 (MSRRVEFDMSHEDHTDRRRTNTFSSEED) is disordered. A PCI domain is found at 297 to 485 (EATKMFVNCL…GPSTVDDDEP (189 aa)).

It belongs to the eIF-3 subunit L family. As to quaternary structure, component of the eukaryotic translation initiation factor 3 (eIF-3) complex.

Its subcellular location is the cytoplasm. Functionally, component of the eukaryotic translation initiation factor 3 (eIF-3) complex, which is involved in protein synthesis of a specialized repertoire of mRNAs and, together with other initiation factors, stimulates binding of mRNA and methionyl-tRNAi to the 40S ribosome. The eIF-3 complex specifically targets and initiates translation of a subset of mRNAs involved in cell proliferation. This Caenorhabditis briggsae protein is Eukaryotic translation initiation factor 3 subunit L.